We begin with the raw amino-acid sequence, 351 residues long: MRQQEILQKLLEGHDLSRQEMETCMNSIMENRFTDAGTGAILALLQKKGATPAEVIGACASIVSKSTPVTLDQQAVDTCGTGGDHTGTFNISTAAAFIACGAGIPIAKHGNRSITSKCGSADVLEALGYQVDLPPCATEELFRETGFAFLFAPLYHPSMKAVAAIRKELGIKTIFNMLGPIINPAGVRRQLIGVFDPSVMDIYAEVLLLNGCEHAMLVHGSTGNSMGLDEPSVCGPTSMIELHQGQIIRHTVEPEDFGLGRWDIGELAGGDSHVNAQIIREILDGSAPQAKIDAALFASAITCYVSGKASCIDEGMSLSKGSLETCEALDKMNLIIKTNQRLAQKCASATN.

Residues glycine 80, 83 to 84 (GD), threonine 88, 90 to 93 (NIST), 108 to 116 (KHGNRSITS), and serine 120 contribute to the 5-phospho-alpha-D-ribose 1-diphosphate site. Glycine 80 contributes to the anthranilate binding site. Residue serine 92 coordinates Mg(2+). Asparagine 111 contacts anthranilate. Arginine 166 serves as a coordination point for anthranilate. Mg(2+) is bound by residues aspartate 229 and glutamate 230.

Belongs to the anthranilate phosphoribosyltransferase family. Homodimer. Requires Mg(2+) as cofactor.

The catalysed reaction is N-(5-phospho-beta-D-ribosyl)anthranilate + diphosphate = 5-phospho-alpha-D-ribose 1-diphosphate + anthranilate. The protein operates within amino-acid biosynthesis; L-tryptophan biosynthesis; L-tryptophan from chorismate: step 2/5. Functionally, catalyzes the transfer of the phosphoribosyl group of 5-phosphorylribose-1-pyrophosphate (PRPP) to anthranilate to yield N-(5'-phosphoribosyl)-anthranilate (PRA). The sequence is that of Anthranilate phosphoribosyltransferase from Chlorobaculum tepidum (strain ATCC 49652 / DSM 12025 / NBRC 103806 / TLS) (Chlorobium tepidum).